A 430-amino-acid chain; its full sequence is Adenylosuccinate synthetase (430 aa).

GTP is bound by residues 12–18 and 40–42; these read GDEGKGK and GHT. The active-site Proton acceptor is D13. Positions 13 and 40 each coordinate Mg(2+). Residues 13 to 16, 38 to 41, T130, R144, Q225, T240, and R304 contribute to the IMP site; these read DEGK and NAGH. The active-site Proton donor is H41. Position 300-306 (300-306) interacts with substrate; sequence STTGRPR. GTP-binding positions include R306, 332–334, and 414–416; these read KLD and SVG.

The protein belongs to the adenylosuccinate synthetase family. As to quaternary structure, homodimer. Requires Mg(2+) as cofactor.

Its subcellular location is the cytoplasm. It carries out the reaction IMP + L-aspartate + GTP = N(6)-(1,2-dicarboxyethyl)-AMP + GDP + phosphate + 2 H(+). Its pathway is purine metabolism; AMP biosynthesis via de novo pathway; AMP from IMP: step 1/2. In terms of biological role, plays an important role in the de novo pathway of purine nucleotide biosynthesis. Catalyzes the first committed step in the biosynthesis of AMP from IMP. The sequence is that of Adenylosuccinate synthetase from Pelobacter propionicus (strain DSM 2379 / NBRC 103807 / OttBd1).